The chain runs to 122 residues: Large ribosomal subunit protein uL14 (122 aa).

This sequence belongs to the universal ribosomal protein uL14 family. Part of the 50S ribosomal subunit. Forms a cluster with proteins L3 and L19. In the 70S ribosome, L14 and L19 interact and together make contacts with the 16S rRNA in bridges B5 and B8.

In terms of biological role, binds to 23S rRNA. Forms part of two intersubunit bridges in the 70S ribosome. The polypeptide is Large ribosomal subunit protein uL14 (Parvibaculum lavamentivorans (strain DS-1 / DSM 13023 / NCIMB 13966)).